A 534-amino-acid chain; its full sequence is Coiled-coil domain-containing protein 183 (534 aa).

3 coiled-coil regions span residues 10 to 54, 136 to 209, and 323 to 396; these read EEQT…NIRR, DASK…DMKI, and LAQR…HSNM.

This is Coiled-coil domain-containing protein 183 (CCDC183) from Homo sapiens (Human).